Here is a 262-residue protein sequence, read N- to C-terminus: Small ribosomal subunit protein eS4A (262 aa).

The region spanning 42–105 (LPLIVFLRNR…GEHFRLVYDI (64 aa)) is the S4 RNA-binding domain.

This sequence belongs to the eukaryotic ribosomal protein eS4 family. As to quaternary structure, component of the small ribosomal subunit (SSU). Mature yeast ribosomes consist of a small (40S) and a large (60S) subunit. The 40S small subunit contains 1 molecule of ribosomal RNA (18S rRNA) and at least 33 different proteins. The large 60S subunit contains 3 rRNA molecules (25S, 5.8S and 5S rRNA) and at least 46 different proteins.

It is found in the cytoplasm. Component of the ribosome, a large ribonucleoprotein complex responsible for the synthesis of proteins in the cell. The small ribosomal subunit (SSU) binds messenger RNAs (mRNAs) and translates the encoded message by selecting cognate aminoacyl-transfer RNA (tRNA) molecules. The large subunit (LSU) contains the ribosomal catalytic site termed the peptidyl transferase center (PTC), which catalyzes the formation of peptide bonds, thereby polymerizing the amino acids delivered by tRNAs into a polypeptide chain. The nascent polypeptides leave the ribosome through a tunnel in the LSU and interact with protein factors that function in enzymatic processing, targeting, and the membrane insertion of nascent chains at the exit of the ribosomal tunnel. This chain is Small ribosomal subunit protein eS4A (rps401), found in Schizosaccharomyces pombe (strain 972 / ATCC 24843) (Fission yeast).